Reading from the N-terminus, the 90-residue chain is uncharacterized protein (90 aa).

This is an uncharacterized protein from Rickettsia prowazekii (strain Madrid E).